The sequence spans 682 residues: Kinesin-like protein KIF2A (682 aa).

The interval 1–192 is globular; that stretch reads MVTSLNEDSE…LDYRPLTTSD (192 aa). Residues 39–129 are disordered; it reads LAPDEEIDPG…GKKDFGLASR (91 aa). A compositionally biased stretch (polar residues) spans 99-115; it reads IEQSASRQQNGSVSDIS. Residues 198–528 enclose the Kinesin motor domain; that stretch reads RICVCVRKRP…LRYANRVKEL (331 aa). 288-295 contributes to the ATP binding site; it reads GQTGSGKT. Positions 638–673 form a coiled coil; that stretch reads QLEAILEKKIDILTELRDKVKSFRAALQEEEHASKQ.

Belongs to the TRAFAC class myosin-kinesin ATPase superfamily. Kinesin family. MCAK/KIF2 subfamily. In terms of assembly, interacts with aurka and plk1. Phosphorylation by plk1 promotes location at spindle microtubules and spindle poles, and enhances its microtubule depolymerization activity. Post-translationally, phosphorylation by AURKA interferes with location at spindle microtubules and spindle poles, and inhibits its microtubule depolymerization activity.

It localises to the cytoplasm. Its subcellular location is the cytoskeleton. The protein localises to the microtubule organizing center. The protein resides in the centrosome. It is found in the spindle pole. It localises to the spindle. Plus end-directed microtubule-dependent motor. May regulate microtubule dynamics during axonal growth. Required for normal progression through mitosis. Required for normal congress of chromosomes at the metaphase plate. Required for normal spindle dynamics during mitosis. Promotes spindle turnover. Implicated in formation of bipolar mitotic spindles Has microtubule depolymerization activity. This Xenopus laevis (African clawed frog) protein is Kinesin-like protein KIF2A (kif2a).